Here is a 218-residue protein sequence, read N- to C-terminus: Pyridoxine/pyridoxamine 5'-phosphate oxidase (218 aa).

Residues 14 to 17 (RREY) and K72 contribute to the substrate site. FMN contacts are provided by residues 67 to 72 (RIVLLK), 82 to 83 (YT), R88, K89, and Q111. Residues Y129, R133, and S137 each contribute to the substrate site. FMN contacts are provided by residues 146–147 (QS) and W191. 197–199 (RLH) serves as a coordination point for substrate. R201 serves as a coordination point for FMN.

The protein belongs to the pyridoxamine 5'-phosphate oxidase family. As to quaternary structure, homodimer. FMN serves as cofactor.

It catalyses the reaction pyridoxamine 5'-phosphate + O2 + H2O = pyridoxal 5'-phosphate + H2O2 + NH4(+). The catalysed reaction is pyridoxine 5'-phosphate + O2 = pyridoxal 5'-phosphate + H2O2. It participates in cofactor metabolism; pyridoxal 5'-phosphate salvage; pyridoxal 5'-phosphate from pyridoxamine 5'-phosphate: step 1/1. The protein operates within cofactor metabolism; pyridoxal 5'-phosphate salvage; pyridoxal 5'-phosphate from pyridoxine 5'-phosphate: step 1/1. Functionally, catalyzes the oxidation of either pyridoxine 5'-phosphate (PNP) or pyridoxamine 5'-phosphate (PMP) into pyridoxal 5'-phosphate (PLP). This is Pyridoxine/pyridoxamine 5'-phosphate oxidase from Escherichia coli O45:K1 (strain S88 / ExPEC).